We begin with the raw amino-acid sequence, 264 residues long: MSKISLTQVQKMKQSGEKIAMITAYDATFARLFDDEGVHSILVGDSLGMVVQGHNDTLPVTVNDMVYHTANVARGVQNALLIADLPFMSYSDVHSACINAGRLMAAGAKMVKIEGGDWLCDTVKQLNRNGIPVCAHLGLTPQSVHLFGGFRIQGRDAQRAEEIYHHALALQTAGVQMVVLECVPEQLAERITKALRIPVIGIGAGAQTDGQVLVMQDALGVTTGYIPKFSKNFLAETGDVRKAIQLYVEQVANGQFPAAEHTFN.

Mg(2+) is bound by residues Asp45 and Asp84. 3-methyl-2-oxobutanoate contacts are provided by residues 45–46 (DS), Asp84, and Lys112. Glu114 contributes to the Mg(2+) binding site. Glu181 functions as the Proton acceptor in the catalytic mechanism.

The protein belongs to the PanB family. As to quaternary structure, homodecamer; pentamer of dimers. Requires Mg(2+) as cofactor.

It localises to the cytoplasm. It catalyses the reaction 3-methyl-2-oxobutanoate + (6R)-5,10-methylene-5,6,7,8-tetrahydrofolate + H2O = 2-dehydropantoate + (6S)-5,6,7,8-tetrahydrofolate. It functions in the pathway cofactor biosynthesis; (R)-pantothenate biosynthesis; (R)-pantoate from 3-methyl-2-oxobutanoate: step 1/2. Its function is as follows. Catalyzes the reversible reaction in which hydroxymethyl group from 5,10-methylenetetrahydrofolate is transferred onto alpha-ketoisovalerate to form ketopantoate. The sequence is that of 3-methyl-2-oxobutanoate hydroxymethyltransferase from Tolumonas auensis (strain DSM 9187 / NBRC 110442 / TA 4).